The chain runs to 157 residues: 2-C-methyl-D-erythritol 2,4-cyclodiphosphate synthase (157 aa).

Residues Asp-8 and His-10 each contribute to the a divalent metal cation site. 4-CDP-2-C-methyl-D-erythritol 2-phosphate is bound by residues Asp-8–His-10 and His-34–Ser-35. Position 42 (His-42) interacts with a divalent metal cation. Residues Asp-56–Gly-58, Phe-61–Asp-65, Ala-100–Ala-106, Thr-132–Glu-135, Phe-139, and Arg-142 contribute to the 4-CDP-2-C-methyl-D-erythritol 2-phosphate site.

This sequence belongs to the IspF family. In terms of assembly, homotrimer. A divalent metal cation serves as cofactor.

The catalysed reaction is 4-CDP-2-C-methyl-D-erythritol 2-phosphate = 2-C-methyl-D-erythritol 2,4-cyclic diphosphate + CMP. It participates in isoprenoid biosynthesis; isopentenyl diphosphate biosynthesis via DXP pathway; isopentenyl diphosphate from 1-deoxy-D-xylulose 5-phosphate: step 4/6. Involved in the biosynthesis of isopentenyl diphosphate (IPP) and dimethylallyl diphosphate (DMAPP), two major building blocks of isoprenoid compounds. Catalyzes the conversion of 4-diphosphocytidyl-2-C-methyl-D-erythritol 2-phosphate (CDP-ME2P) to 2-C-methyl-D-erythritol 2,4-cyclodiphosphate (ME-CPP) with a corresponding release of cytidine 5-monophosphate (CMP). The sequence is that of 2-C-methyl-D-erythritol 2,4-cyclodiphosphate synthase from Ectopseudomonas mendocina (strain ymp) (Pseudomonas mendocina).